The primary structure comprises 569 residues: Proline--tRNA ligase (569 aa).

Belongs to the class-II aminoacyl-tRNA synthetase family. ProS type 1 subfamily. As to quaternary structure, homodimer.

The protein localises to the cytoplasm. The catalysed reaction is tRNA(Pro) + L-proline + ATP = L-prolyl-tRNA(Pro) + AMP + diphosphate. Its function is as follows. Catalyzes the attachment of proline to tRNA(Pro) in a two-step reaction: proline is first activated by ATP to form Pro-AMP and then transferred to the acceptor end of tRNA(Pro). As ProRS can inadvertently accommodate and process non-cognate amino acids such as alanine and cysteine, to avoid such errors it has two additional distinct editing activities against alanine. One activity is designated as 'pretransfer' editing and involves the tRNA(Pro)-independent hydrolysis of activated Ala-AMP. The other activity is designated 'posttransfer' editing and involves deacylation of mischarged Ala-tRNA(Pro). The misacylated Cys-tRNA(Pro) is not edited by ProRS. The polypeptide is Proline--tRNA ligase (Latilactobacillus sakei subsp. sakei (strain 23K) (Lactobacillus sakei subsp. sakei)).